A 365-amino-acid polypeptide reads, in one-letter code: Aminomethyltransferase (365 aa).

It belongs to the GcvT family. The glycine cleavage system is composed of four proteins: P, T, L and H.

It carries out the reaction N(6)-[(R)-S(8)-aminomethyldihydrolipoyl]-L-lysyl-[protein] + (6S)-5,6,7,8-tetrahydrofolate = N(6)-[(R)-dihydrolipoyl]-L-lysyl-[protein] + (6R)-5,10-methylene-5,6,7,8-tetrahydrofolate + NH4(+). Functionally, the glycine cleavage system catalyzes the degradation of glycine. The sequence is that of Aminomethyltransferase from Chlorobium phaeovibrioides (strain DSM 265 / 1930) (Prosthecochloris vibrioformis (strain DSM 265)).